A 148-amino-acid polypeptide reads, in one-letter code: MGRFISVSFGLLVVFLSLSGAGAGFCCPLGWSSYDLYCYKVFKQEMNWTDAEKFCTEQHTGSHLVSFHSSEEADFVVNMTYPILKLDFVWIGLSNVWNQCNSEWSDGTKLNYKDWSGESECIASKTIENQWWSRSCSRTHYVVCKFQA.

The N-terminal stretch at 1–23 (MGRFISVSFGLLVVFLSLSGAGA) is a signal peptide. Cysteines 27 and 38 form a disulfide. One can recognise a C-type lectin domain in the interval 34-145 (YDLYCYKVFK…CSRTHYVVCK (112 aa)). N-linked (GlcNAc...) asparagine glycans are attached at residues asparagine 47 and asparagine 78. Disulfide bonds link cysteine 55–cysteine 144 and cysteine 121–cysteine 136.

It belongs to the snaclec family. In terms of assembly, heteromultimer; disulfide-linked. As to expression, expressed by the venom gland.

It is found in the secreted. In terms of biological role, interferes with one step of hemostasis (modulation of platelet aggregation, or coagulation cascade, for example). The chain is Snaclec stejaggregin-A subunit beta-3 from Trimeresurus stejnegeri (Chinese green tree viper).